A 490-amino-acid chain; its full sequence is MESMTMIILQSLIIFITILFFKKQKRGKKSNTPRSPPRLPLIGNLHQLGHHPHRSLCSLSHRYGPLMLLHLGRVPVLVVSSADVARDILKTHDRVFASRPRSKLFEKLFYDGRDVAFAPYGEYWRQIKSVCVLRLLSNKMVTSFRNVRQEEISLMMEKIQKSSSLQVNVSELLGSLTNDVISRIALGRKYSGETDSKELMKRLMMLMGEFSVGTYVPWLGWIDWISGLDGQLNKTGNDLDEFLEKVVQDHVDGDGQRTDFVDVLLRIQREKSIGFEIDRLCIKAIVLDVLVAGTDSSYALMDWAMTELLRHPECLRTLQEEVRTICKGNLSVSEEDIQNMSYLKAVIKETTRLHPPLPLLAPHESIQDVILGDYHIPAGTQVMINAWAIGREAATWGPDAEKFRPERHLDSSVDFRGHNFELVPFGAGRRICPAISFAVVLIEVALANFVHRYDWKLPEDSKENQTNVAESTGMVIHRLFPLYAIASSTT.

Residues 1–21 form a helical membrane-spanning segment; the sequence is MESMTMIILQSLIIFITILFF. Cysteine 432 lines the heme pocket.

Belongs to the cytochrome P450 family. Heme is required as a cofactor.

It is found in the membrane. The protein is Cytochrome P450 71A21 (CYP71A21) of Arabidopsis thaliana (Mouse-ear cress).